The following is an 86-amino-acid chain: Small ribosomal subunit protein uS17 (86 aa).

The protein belongs to the universal ribosomal protein uS17 family. Part of the 30S ribosomal subunit.

In terms of biological role, one of the primary rRNA binding proteins, it binds specifically to the 5'-end of 16S ribosomal RNA. This chain is Small ribosomal subunit protein uS17, found in Streptococcus gordonii (strain Challis / ATCC 35105 / BCRC 15272 / CH1 / DL1 / V288).